The sequence spans 256 residues: Ribosomal RNA small subunit methyltransferase J (256 aa).

S-adenosyl-L-methionine contacts are provided by residues 104-105, 120-121, 156-157, and D174; these read RD, ER, and SS.

Belongs to the methyltransferase superfamily. RsmJ family.

It is found in the cytoplasm. It catalyses the reaction guanosine(1516) in 16S rRNA + S-adenosyl-L-methionine = N(2)-methylguanosine(1516) in 16S rRNA + S-adenosyl-L-homocysteine + H(+). In terms of biological role, specifically methylates the guanosine in position 1516 of 16S rRNA. The protein is Ribosomal RNA small subunit methyltransferase J of Yersinia pseudotuberculosis serotype O:1b (strain IP 31758).